The chain runs to 359 residues: 3-dehydroquinate synthase (359 aa).

Residues 71-76 (DGEQYK), 104-108 (GVVGD), 128-129 (TT), Lys141, Lys150, and 168-171 (TLNT) contribute to the NAD(+) site. Zn(2+) contacts are provided by Glu183, His247, and His264.

Belongs to the sugar phosphate cyclases superfamily. Dehydroquinate synthase family. Co(2+) serves as cofactor. Zn(2+) is required as a cofactor. It depends on NAD(+) as a cofactor.

It localises to the cytoplasm. The catalysed reaction is 7-phospho-2-dehydro-3-deoxy-D-arabino-heptonate = 3-dehydroquinate + phosphate. The protein operates within metabolic intermediate biosynthesis; chorismate biosynthesis; chorismate from D-erythrose 4-phosphate and phosphoenolpyruvate: step 2/7. In terms of biological role, catalyzes the conversion of 3-deoxy-D-arabino-heptulosonate 7-phosphate (DAHP) to dehydroquinate (DHQ). The sequence is that of 3-dehydroquinate synthase from Coxiella burnetii (strain Dugway 5J108-111).